A 318-amino-acid polypeptide reads, in one-letter code: Methionyl-tRNA formyltransferase (318 aa).

(6S)-5,6,7,8-tetrahydrofolate is bound at residue 112-115 (SLLP).

It belongs to the Fmt family.

The enzyme catalyses L-methionyl-tRNA(fMet) + (6R)-10-formyltetrahydrofolate = N-formyl-L-methionyl-tRNA(fMet) + (6S)-5,6,7,8-tetrahydrofolate + H(+). Its function is as follows. Attaches a formyl group to the free amino group of methionyl-tRNA(fMet). The formyl group appears to play a dual role in the initiator identity of N-formylmethionyl-tRNA by promoting its recognition by IF2 and preventing the misappropriation of this tRNA by the elongation apparatus. The polypeptide is Methionyl-tRNA formyltransferase (Mycobacterium leprae (strain Br4923)).